A 393-amino-acid polypeptide reads, in one-letter code: S-adenosylmethionine synthase (393 aa).

Residue His-17 coordinates ATP. Asp-19 contributes to the Mg(2+) binding site. Residue Glu-45 coordinates K(+). L-methionine-binding residues include Glu-58 and Gln-106. The flexible loop stretch occupies residues 106-116 (QSAHIAQGVNA). Residues 171-173 (DAK), 237-238 (KF), Asp-246, 252-253 (RK), Ala-269, and Lys-273 each bind ATP. Asp-246 is an L-methionine binding site. Lys-277 serves as a coordination point for L-methionine.

The protein belongs to the AdoMet synthase family. In terms of assembly, homotetramer; dimer of dimers. The cofactor is Mg(2+). K(+) serves as cofactor.

The protein localises to the cytoplasm. It carries out the reaction L-methionine + ATP + H2O = S-adenosyl-L-methionine + phosphate + diphosphate. It functions in the pathway amino-acid biosynthesis; S-adenosyl-L-methionine biosynthesis; S-adenosyl-L-methionine from L-methionine: step 1/1. Its function is as follows. Catalyzes the formation of S-adenosylmethionine (AdoMet) from methionine and ATP. The overall synthetic reaction is composed of two sequential steps, AdoMet formation and the subsequent tripolyphosphate hydrolysis which occurs prior to release of AdoMet from the enzyme. In Ruegeria pomeroyi (strain ATCC 700808 / DSM 15171 / DSS-3) (Silicibacter pomeroyi), this protein is S-adenosylmethionine synthase.